The sequence spans 92 residues: Small ribosomal subunit protein uS19c (92 aa).

This sequence belongs to the universal ribosomal protein uS19 family.

It is found in the plastid. The protein localises to the chloroplast. Its function is as follows. Protein S19 forms a complex with S13 that binds strongly to the 16S ribosomal RNA. The polypeptide is Small ribosomal subunit protein uS19c (Coffea arabica (Arabian coffee)).